Consider the following 486-residue polypeptide: MTIESCPGGRVGEDGITNPSNIRVLVVGVGIGGLAAAIECHRKGHSVILVDKIAQVDPLAGDGIGIGTNGARIIAKWGGGRVHDQILSHRCDTRKIEILNRQGESFGQHELKGYGRDHGYMLNRGQLVSILFDYAGTLGIDKRLGSPVTEYRETEMGAAVVLEGGEVIEADCVICSDGVHGAGRKFVTSLDPVSRESGWAMSRAYLRKEDLKPHRDRDVRILDGTDKQDRMMVWFDHGIQVSMWTVKHGEELVWIVTHKVSVDLSLLPPPTLGTKDARDTWTMEGSESMIEDTISQIHDWPSRNMIEPILRSTPPKRLLNQKIITREPLDRWVSPHGRMIIIGDAAHPYPPISGQGGSQAIEDAAVVAIALQLAGKDHVPLALRIAEKIRSVTSHYLMLQGHHMLKSTGSHPRATAIQTEASHLYELMFKPDWGVVAKNPSILAPPCPKWLFQHDSQAYVYAEFGKIAEAMADGREYVIANTPPSA.

Positions 51, 65, and 124 each coordinate FAD. Arg-203 is an active-site residue. Asp-344 and Gly-357 together coordinate FAD.

It belongs to the paxM FAD-dependent monooxygenase family. Requires FAD as cofactor.

The protein operates within secondary metabolite biosynthesis. Its function is as follows. Flavin-dependent monooxygenase; part of the gene cluster that mediates the biosynthesis of protubonine B, a hydroxylated and diacetylated cyclo-L-Trp-L-Leu derivative. Within the pathway, pboD catalyzes the hydroxylation at C-3 of the indole ring of cyclo-L-Trp-L-Leu and subsequent formation of the pyrrolidine ring, eading to the production of protubonine D. PboD is also able to accept other cyclodipeptides (CDPs) as substrates, including cyclo-L-Trp-L-Trp, cyclo-L-Trp-L-Tyr, cyclo-L-Trp-L-Phe, cyclo-L-Trp-L-Met, cyclo-L-Trp-L-Ala, cyclo-L-Trp-L-Pro and cyclo-L-Trp-Gly. Assays with cyclo-L-Trp-L-Trp, cyclo-L-Trp-L-Tyr, cyclo-L-Trp-L-Phe show similar or even slightly higher conversion yields, compared with that of the natural substrate cyclo-L-Trp-L-Leu, whereas cyclo-L-Trp-L-Pro and cyclo-L-Trp-Gly are accepted by PboD but only with conversion yields of 10 and 4%, respectively. Cyclo-L-Trp-L-His is not accepted as a substrate. The first step of the protubonine B synthesis is performed by the nonribosomal peptide synthetase pboA that catalyzes the formation of cyclo-L-Trp-L-Leu by condensing L-Leu with L-Trp. The flavin-dependent monooxygenase pboD is responsible for hydroxylation at C-3 of the indole ring and subsequent formation of the pyrrolidine ring, leadind to protubonine D. Protubonine D is further diacetylated by two acetyltransferases, pboB and pboC, to form the final product protubonine B via protubonine C. This Aspergillus ustus protein is Flavin-dependent monooxygenase pboD.